A 254-amino-acid chain; its full sequence is Alcohol dehydrogenase (254 aa).

10-33 (FVAGLGGIGLDTSREIVKSGPKNL) serves as a coordination point for NAD(+). A substrate-binding site is contributed by serine 138. Tyrosine 151 (proton acceptor) is an active-site residue.

Belongs to the short-chain dehydrogenases/reductases (SDR) family. As to quaternary structure, homodimer.

The catalysed reaction is a primary alcohol + NAD(+) = an aldehyde + NADH + H(+). The enzyme catalyses a secondary alcohol + NAD(+) = a ketone + NADH + H(+). The sequence is that of Alcohol dehydrogenase (Adh) from Drosophila differens (Fruit fly).